The following is a 98-amino-acid chain: Aspartyl/glutamyl-tRNA(Asn/Gln) amidotransferase subunit C (98 aa).

A disordered region spans residues 70-98; sequence PSLTPEQALSGAPAQEQQRFKVPQILGED.

This sequence belongs to the GatC family. Heterotrimer of A, B and C subunits.

It catalyses the reaction L-glutamyl-tRNA(Gln) + L-glutamine + ATP + H2O = L-glutaminyl-tRNA(Gln) + L-glutamate + ADP + phosphate + H(+). It carries out the reaction L-aspartyl-tRNA(Asn) + L-glutamine + ATP + H2O = L-asparaginyl-tRNA(Asn) + L-glutamate + ADP + phosphate + 2 H(+). In terms of biological role, allows the formation of correctly charged Asn-tRNA(Asn) or Gln-tRNA(Gln) through the transamidation of misacylated Asp-tRNA(Asn) or Glu-tRNA(Gln) in organisms which lack either or both of asparaginyl-tRNA or glutaminyl-tRNA synthetases. The reaction takes place in the presence of glutamine and ATP through an activated phospho-Asp-tRNA(Asn) or phospho-Glu-tRNA(Gln). This Streptomyces avermitilis (strain ATCC 31267 / DSM 46492 / JCM 5070 / NBRC 14893 / NCIMB 12804 / NRRL 8165 / MA-4680) protein is Aspartyl/glutamyl-tRNA(Asn/Gln) amidotransferase subunit C.